Consider the following 1867-residue polypeptide: TATA-binding protein-associated factor MOT1 (1867 aa).

Position 93 is a phosphoserine (serine 93). Positions 169 to 228 are disordered; that stretch reads KTDDIKQETSMLNASDKANENKSNANKKSARMLAMARRKKKMSAKNTPKHPVDITESSVS. Low complexity predominate over residues 181–203; that stretch reads NASDKANENKSNANKKSARMLAM. The Nuclear localization signal motif lies at 195–211; sequence KKSARMLAMARRKKKMS. 3 HEAT repeats span residues 289 to 326, 445 to 482, and 541 to 578; these read WQFQ…KHAY, GLLE…EFVK, and WSFK…IKDD. Residue serine 677 is modified to Phosphoserine. HEAT repeat units follow at residues 1108–1145 and 1188–1225; these read SEVF…ISSV and PYVI…LVPL. The Helicase ATP-binding domain occupies 1284–1457; the sequence is AFLNKYHLHG…WSLFDFLMPG (174 aa). An ATP-binding site is contributed by 1297 to 1304; that stretch reads DDMGLGKT. The DEGH box motif lies at 1408–1411; sequence DEGH. One copy of the HEAT 6 repeat lies at 1495-1537; that stretch reads ALHKQVLPFMLRRLKEDVLSDLPPKIIQDYYCELGDLQKQLYM. A Helicase C-terminal domain is found at 1639–1787; the sequence is PIQNVISQHR…STVVNQQNSG (149 aa). A disordered region spans residues 1802–1822; sequence PDNVTSQDNEEKNNGDSQAAK.

This sequence belongs to the SNF2/RAD54 helicase family. In terms of assembly, forms a complex with TBP which binds TATA DNA with high affinity but with altered specificity.

It is found in the mitochondrion. The protein resides in the nucleus. Its function is as follows. Regulates transcription in association with TATA binding protein (TBP). Removes TBP from the TATA box via its C-terminal ATPase activity. Both transcription activation and repression require its ATPase activity. The polypeptide is TATA-binding protein-associated factor MOT1 (MOT1) (Saccharomyces cerevisiae (strain ATCC 204508 / S288c) (Baker's yeast)).